A 208-amino-acid polypeptide reads, in one-letter code: Urease accessory protein UreE (208 aa).

The tract at residues 145 to 165 (EGGAYSAGGHGHTHAPAATPV) is disordered.

This sequence belongs to the UreE family.

Its subcellular location is the cytoplasm. Functionally, involved in urease metallocenter assembly. Binds nickel. Probably functions as a nickel donor during metallocenter assembly. The sequence is that of Urease accessory protein UreE from Polaromonas naphthalenivorans (strain CJ2).